A 331-amino-acid chain; its full sequence is 6-phosphogluconolactonase (331 aa).

K287 is subject to N6-acetyllysine.

This sequence belongs to the cycloisomerase 2 family.

It carries out the reaction 6-phospho-D-glucono-1,5-lactone + H2O = 6-phospho-D-gluconate + H(+). It functions in the pathway carbohydrate degradation; pentose phosphate pathway; D-ribulose 5-phosphate from D-glucose 6-phosphate (oxidative stage): step 2/3. In terms of biological role, catalyzes the hydrolysis of 6-phosphogluconolactone to 6-phosphogluconate. This chain is 6-phosphogluconolactonase, found in Shigella boydii serotype 18 (strain CDC 3083-94 / BS512).